The chain runs to 153 residues: Histone H2B.3 (153 aa).

2 stretches are compositionally biased toward basic and acidic residues: residues 1 to 10 (MAPKKDEKPA) and 20 to 54 (AKAE…GEKK). The tract at residues 1-60 (MAPKKDEKPATAEAGAEAPAKAEAKPKAEKAGKKAKKEPAKKAAKEPKGDGEKKDKKKKK) is disordered. 2 positions are modified to N6-acetyllysine: Lys-41 and Lys-42. Residue Lys-149 forms a Glycyl lysine isopeptide (Lys-Gly) (interchain with G-Cter in ubiquitin) linkage.

It belongs to the histone H2B family. As to quaternary structure, the nucleosome is a histone octamer containing two molecules each of H2A, H2B, H3 and H4 assembled in one H3-H4 heterotetramer and two H2A-H2B heterodimers. The octamer wraps approximately 147 bp of DNA. The N-terminus is blocked. Post-translationally, can be acetylated to form H2BK33ac and H2BK34ac. Acetylated mainly on the ubiquitinated form. In terms of processing, monoubiquitinated to form H2BK143ub1; which is increased during the light period and may give a specific tag for epigenetic transcriptional activation.

Its subcellular location is the nucleus. It localises to the chromosome. Its function is as follows. Core component of nucleosome. Nucleosomes wrap and compact DNA into chromatin, limiting DNA accessibility to the cellular machineries which require DNA as a template. Histones thereby play a central role in transcription regulation, DNA repair, DNA replication and chromosomal stability. DNA accessibility is regulated via a complex set of post-translational modifications of histones, also called histone code, and nucleosome remodeling. The sequence is that of Histone H2B.3 from Chlamydomonas reinhardtii (Chlamydomonas smithii).